The sequence spans 31 residues: Cliotide T11 (31 aa).

Residues 1–31 (GIPCGESCVFIPCTITALLGCSCKDKVCYKN) constitute a cross-link (cyclopeptide (Gly-Asn)). Disulfide bonds link cysteine 4/cysteine 21, cysteine 8/cysteine 23, and cysteine 13/cysteine 28.

In terms of processing, contains 3 disulfide bonds. This is a cyclic peptide. As to expression, expressed in seed but not in root, nodule, flower, stem, shoot, leaf and pod (at protein level).

Its function is as follows. Probably participates in a plant defense mechanism. The protein is Cliotide T11 of Clitoria ternatea (Butterfly pea).